The sequence spans 481 residues: Glutamine synthetase (481 aa).

The GS beta-grasp domain occupies 22-106 (NEVEFVDFRF…VFCDVYDVYK (85 aa)). Positions 114–481 (PRSIAKKALQ…PFEFITTYSC (368 aa)) constitute a GS catalytic domain. Mg(2+) contacts are provided by glutamate 139, glutamate 141, glutamate 223, and glutamate 230. Residues 274–275 (NG) and glycine 275 each bind L-glutamate. Mg(2+) is bound at residue histidine 279. Residues 281–283 (HVS) and serine 283 each bind ATP. Residues arginine 331, glutamate 337, and arginine 349 each contribute to the L-glutamate site. ATP is bound by residues arginine 349 and arginine 354. Glutamate 367 serves as a coordination point for Mg(2+). Arginine 369 contributes to the L-glutamate binding site.

The protein belongs to the glutamine synthetase family. Oligomer of 12 subunits arranged in the form of two hexameric ring. Mg(2+) serves as cofactor.

It localises to the cytoplasm. It catalyses the reaction L-glutamate + NH4(+) + ATP = L-glutamine + ADP + phosphate + H(+). With respect to regulation, the activity of this enzyme could be controlled by adenylation under conditions of abundant glutamine. Catalyzes the ATP-dependent biosynthesis of glutamine from glutamate and ammonia. The sequence is that of Glutamine synthetase from Helicobacter pylori (strain ATCC 700392 / 26695) (Campylobacter pylori).